The primary structure comprises 567 residues: CTD small phosphatase-like protein 2 (567 aa).

3 disordered regions span residues 31–53, 100–150, and 280–361; these read QQQQHQHEDTDSPKKKKLRHQCE, ASST…FSSV, and NKEN…EEFN. Low complexity-rich tracts occupy residues 100–118, 130–150, and 286–297; these read ASSTSSISPSSSQSSSPLK, SMNDSTSSSSSSNNNNNFSSV, and ESNNSNSNSNSS. Polar residues predominate over residues 298–308; the sequence is PSFFHNLQQHP. The span at 309-332 shows a compositional bias: low complexity; it reads TSAATTTTTTTTTITTTSATTSII. Over residues 337–360 the composition is skewed to acidic residues; the sequence is NSDDEIDDECDDESEEEEEDEEEF. In terms of domain architecture, FCP1 homology spans 386-544; it reads HSSPKISLVL…LQLVPFLESL (159 aa).

Belongs to the CTDSPL2 family.

Functionally, probable phosphatase. The sequence is that of CTD small phosphatase-like protein 2 (ctdspl2) from Dictyostelium discoideum (Social amoeba).